The following is a 224-amino-acid chain: Urease accessory protein UreF 2 (224 aa).

Belongs to the UreF family. UreD, UreF and UreG form a complex that acts as a GTP-hydrolysis-dependent molecular chaperone, activating the urease apoprotein by helping to assemble the nickel containing metallocenter of UreC. The UreE protein probably delivers the nickel.

The protein localises to the cytoplasm. Functionally, required for maturation of urease via the functional incorporation of the urease nickel metallocenter. This is Urease accessory protein UreF 2 from Pseudomonas syringae pv. tomato (strain ATCC BAA-871 / DC3000).